The following is a 689-amino-acid chain: tRNA 5-methylaminomethyl-2-thiouridine biosynthesis bifunctional protein MnmC (689 aa).

The tract at residues Met1–Pro245 is tRNA (mnm(5)s(2)U34)-methyltransferase. The FAD-dependent cmnm(5)s(2)U34 oxidoreductase stretch occupies residues Ile270–Arg689.

It in the N-terminal section; belongs to the methyltransferase superfamily. tRNA (mnm(5)s(2)U34)-methyltransferase family. The protein in the C-terminal section; belongs to the DAO family. FAD serves as cofactor.

It localises to the cytoplasm. It catalyses the reaction 5-aminomethyl-2-thiouridine(34) in tRNA + S-adenosyl-L-methionine = 5-methylaminomethyl-2-thiouridine(34) in tRNA + S-adenosyl-L-homocysteine + H(+). In terms of biological role, catalyzes the last two steps in the biosynthesis of 5-methylaminomethyl-2-thiouridine (mnm(5)s(2)U) at the wobble position (U34) in tRNA. Catalyzes the FAD-dependent demodification of cmnm(5)s(2)U34 to nm(5)s(2)U34, followed by the transfer of a methyl group from S-adenosyl-L-methionine to nm(5)s(2)U34, to form mnm(5)s(2)U34. This is tRNA 5-methylaminomethyl-2-thiouridine biosynthesis bifunctional protein MnmC from Yersinia pestis.